We begin with the raw amino-acid sequence, 136 residues long: Histone H3.2 (136 aa).

The tract at residues Met1–Gly45 is disordered. Asymmetric dimethylarginine; by PRMT6; alternate is present on Arg3. A Citrulline; alternate modification is found at Arg3. Thr4 is modified (phosphothreonine; by HASPIN and VRK1). Residue Lys5 is modified to Allysine; alternate. Lys5 is subject to N6,N6,N6-trimethyllysine; alternate. Lys5 is subject to N6,N6-dimethyllysine; alternate. Residue Lys5 is modified to N6-(2-hydroxyisobutyryl)lysine; alternate. An N6-(beta-hydroxybutyryl)lysine; alternate modification is found at Lys5. Lys5 is modified (N6-acetyllysine; alternate). Position 5 is an N6-crotonyllysine; alternate (Lys5). Lys5 carries the post-translational modification N6-methyllysine; alternate. Gln6 carries the post-translational modification 5-glutamyl dopamine; alternate. Gln6 carries the 5-glutamyl serotonin; alternate modification. Position 7 is a phosphothreonine; by PKC (Thr7). Position 9 is a citrulline; alternate (Arg9). At Arg9 the chain carries Symmetric dimethylarginine; by PRMT5; alternate. An N6,N6,N6-trimethyllysine; alternate modification is found at Lys10. An N6,N6-dimethyllysine; alternate modification is found at Lys10. An N6-(2-hydroxyisobutyryl)lysine; alternate modification is found at Lys10. Lys10 carries the post-translational modification N6-(beta-hydroxybutyryl)lysine; alternate. At Lys10 the chain carries N6-acetyllysine; alternate. Residue Lys10 is modified to N6-crotonyllysine; alternate. At Lys10 the chain carries N6-methyllysine; alternate. Residue Lys10 is modified to N6-lactoyllysine; alternate. Residue Ser11 is modified to ADP-ribosylserine; alternate. Ser11 bears the Phosphoserine; alternate; by AURKB, AURKC, RPS6KA3, RPS6KA4 and RPS6KA5 mark. Thr12 is modified (phosphothreonine; by PKC). Lys15 carries the post-translational modification N6-(2-hydroxyisobutyryl)lysine; alternate. Position 15 is an N6-(beta-hydroxybutyryl)lysine; alternate (Lys15). Lys15 carries the N6-acetyllysine; alternate modification. Residue Lys15 is modified to N6-lactoyllysine; alternate. Position 15 is an N6-glutaryllysine; alternate (Lys15). Lys15 bears the N6-succinyllysine; alternate mark. Arg18 is subject to Citrulline; alternate. Arg18 bears the Asymmetric dimethylarginine; by CARM1; alternate mark. N6-(2-hydroxyisobutyryl)lysine; alternate is present on residues Lys19 and Lys24. Lys19 and Lys24 each carry N6-(beta-hydroxybutyryl)lysine; alternate. N6-acetyllysine; alternate occurs at positions 19 and 24. Lys19 and Lys24 each carry N6-crotonyllysine; alternate. An N6-methyllysine; alternate mark is found at Lys19 and Lys24. N6-lactoyllysine; alternate occurs at positions 19 and 24. 2 positions are modified to N6-glutaryllysine; alternate: Lys19 and Lys24. 2 positions are modified to N6-butyryllysine; alternate: Lys19 and Lys24. The N6-decanoyllysine moiety is linked to residue Lys19. Arg27 carries the citrulline modification. Lys28 is subject to N6,N6,N6-trimethyllysine; alternate. Lys28 is modified (N6,N6-dimethyllysine; alternate). At Lys28 the chain carries N6-(2-hydroxyisobutyryl)lysine; alternate. Lys28 carries the post-translational modification N6-acetyllysine; alternate. Lys28 is modified (N6-crotonyllysine; alternate). At Lys28 the chain carries N6-methyllysine; alternate. Position 28 is an N6-lactoyllysine; alternate (Lys28). Position 28 is an N6-glutaryllysine; alternate (Lys28). Position 29 is an ADP-ribosylserine; alternate (Ser29). Ser29 carries the phosphoserine; alternate; by AURKB, AURKC and RPS6KA5 modification. Position 37 is an N6,N6,N6-trimethyllysine; alternate (Lys37). Residue Lys37 is modified to N6,N6-dimethyllysine; alternate. Lys37 carries the N6-(2-hydroxyisobutyryl)lysine; alternate modification. Residue Lys37 is modified to N6-acetyllysine; alternate. Lys37 bears the N6-methyllysine; alternate mark. Lys38 is modified (N6-methyllysine). Phosphotyrosine is present on Tyr42. Lys57 is subject to N6,N6,N6-trimethyllysine; alternate. At Lys57 the chain carries N6-(2-hydroxyisobutyryl)lysine; alternate. Lys57 carries the post-translational modification N6-(beta-hydroxybutyryl)lysine; alternate. Residue Lys57 is modified to N6-acetyllysine; alternate. N6-crotonyllysine; alternate is present on Lys57. At Lys57 the chain carries N6-lactoyllysine; alternate. Lys57 carries the N6-glutaryllysine; alternate modification. An N6-succinyllysine; alternate modification is found at Lys57. Lys57 carries the N6-methyllysine; by EHMT2; alternate modification. A Phosphoserine modification is found at Ser58. An N6-(2-hydroxyisobutyryl)lysine; alternate mark is found at Lys65 and Lys80. N6-methyllysine; alternate is present on residues Lys65 and Lys80. Residue Lys80 is modified to N6,N6,N6-trimethyllysine; alternate. Lys80 carries the post-translational modification N6,N6-dimethyllysine; alternate. Lys80 is modified (N6-acetyllysine; alternate). The residue at position 80 (Lys80) is an N6-lactoyllysine; alternate. Residue Lys80 is modified to N6-glutaryllysine; alternate. The residue at position 80 (Lys80) is an N6-succinyllysine; alternate. Thr81 bears the Phosphothreonine mark. Ser87 is modified (phosphoserine). Thr108 is subject to Phosphothreonine. Cys111 is lipidated: S-palmitoyl cysteine. Lys116 and Lys123 each carry N6-acetyllysine; alternate. 2 positions are modified to N6-glutaryllysine; alternate: Lys116 and Lys123. Lys123 carries the post-translational modification N6-(2-hydroxyisobutyryl)lysine; alternate. Lys123 is modified (N6-methyllysine; alternate). Lys123 is subject to N6-succinyllysine; alternate.

This sequence belongs to the histone H3 family. As to quaternary structure, the nucleosome is a histone octamer containing two molecules each of H2A, H2B, H3 and H4 assembled in one H3-H4 heterotetramer and two H2A-H2B heterodimers. The octamer wraps approximately 147 bp of DNA. During nucleosome assembly the chaperone ASF1A interacts with the histone H3-H4 heterodimer (via C-terminus of H3); this interaction is direct. Interacts with DNAJC9, CHAF1A and CHAF1B. Interacts with NASP; NASP is a histone chaperone that stabilizes and maintains a soluble pool of Histone H3-H4 dimers. Post-translationally, acetylation is generally linked to gene activation. Acetylation on Lys-10 (H3K9ac) impairs methylation at Arg-9 (H3R8me2s). Acetylation on Lys-19 (H3K18ac) and Lys-24 (H3K24ac) favors methylation at Arg-18 (H3R17me). Acetylation at Lys-123 (H3K122ac) by EP300/p300 plays a central role in chromatin structure: localizes at the surface of the histone octamer and stimulates transcription, possibly by promoting nucleosome instability. Citrullination at Arg-9 (H3R8ci) and/or Arg-18 (H3R17ci) by PADI4 impairs methylation and represses transcription. In terms of processing, asymmetric dimethylation at Arg-18 (H3R17me2a) by CARM1 is linked to gene activation. Symmetric dimethylation at Arg-9 (H3R8me2s) by PRMT5 is linked to gene repression. Asymmetric dimethylation at Arg-3 (H3R2me2a) by PRMT6 is linked to gene repression and is mutually exclusive with H3 Lys-5 methylation (H3K4me2 and H3K4me3). H3R2me2a is present at the 3' of genes regardless of their transcription state and is enriched on inactive promoters, while it is absent on active promoters. Post-translationally, methylation at Lys-5 (H3K4me), Lys-37 (H3K36me) and Lys-80 (H3K79me) are linked to gene activation. Methylation at Lys-5 (H3K4me) facilitates subsequent acetylation of H3 and H4. Methylation at Lys-80 (H3K79me) is associated with DNA double-strand break (DSB) responses and is a specific target for TP53BP1. Methylation at Lys-10 (H3K9me) and Lys-28 (H3K27me) are linked to gene repression. Methylation at Lys-10 (H3K9me) is a specific target for HP1 proteins (CBX1, CBX3 and CBX5) and prevents subsequent phosphorylation at Ser-11 (H3S10ph) and acetylation of H3 and H4. Methylation at Lys-5 (H3K4me) and Lys-80 (H3K79me) require preliminary monoubiquitination of H2B at 'Lys-120'. Methylation at Lys-10 (H3K9me) and Lys-28 (H3K27me) are enriched in inactive X chromosome chromatin. Monomethylation at Lys-57 (H3K56me1) by EHMT2/G9A in G1 phase promotes interaction with PCNA and is required for DNA replication. Phosphorylated at Thr-4 (H3T3ph) by VRK1. Phosphorylated at Thr-4 (H3T3ph) by HASPIN during prophase and dephosphorylated during anaphase. Phosphorylation at Ser-11 (H3S10ph) by AURKB is crucial for chromosome condensation and cell-cycle progression during mitosis and meiosis. In addition phosphorylation at Ser-11 (H3S10ph) by RPS6KA4 and RPS6KA5 is important during interphase because it enables the transcription of genes following external stimulation, like mitogens, stress, growth factors or UV irradiation and result in the activation of genes, such as c-fos and c-jun. Phosphorylation at Ser-11 (H3S10ph), which is linked to gene activation, prevents methylation at Lys-10 (H3K9me) but facilitates acetylation of H3 and H4. Phosphorylation at Ser-11 (H3S10ph) by AURKB mediates the dissociation of HP1 proteins (CBX1, CBX3 and CBX5) from heterochromatin. Phosphorylation at Ser-11 (H3S10ph) is also an essential regulatory mechanism for neoplastic cell transformation. Phosphorylated at Ser-29 (H3S28ph) by MAP3K20 isoform 1, RPS6KA5 or AURKB during mitosis or upon ultraviolet B irradiation. Phosphorylation at Thr-7 (H3T6ph) by PRKCB is a specific tag for epigenetic transcriptional activation that prevents demethylation of Lys-5 (H3K4me) by LSD1/KDM1A. At centromeres, specifically phosphorylated at Thr-12 (H3T11ph) from prophase to early anaphase, by DAPK3 and PKN1. Phosphorylation at Thr-12 (H3T11ph) by PKN1 or isoform M2 of PKM (PKM2) is a specific tag for epigenetic transcriptional activation that promotes demethylation of Lys-10 (H3K9me) by KDM4C/JMJD2C. Phosphorylation at Tyr-42 (H3Y41ph) by JAK2 promotes exclusion of CBX5 (HP1 alpha) from chromatin. In terms of processing, monoubiquitinated by RAG1 in lymphoid cells, monoubiquitination is required for V(D)J recombination. Ubiquitinated by the CUL4-DDB-RBX1 complex in response to ultraviolet irradiation. This may weaken the interaction between histones and DNA and facilitate DNA accessibility to repair proteins. Post-translationally, lysine deamination at Lys-5 (H3K4all) to form allysine is mediated by LOXL2. Allysine formation by LOXL2 only takes place on H3K4me3 and results in gene repression. Crotonylation (Kcr) is specifically present in male germ cells and marks testis-specific genes in post-meiotic cells, including X-linked genes that escape sex chromosome inactivation in haploid cells. Crotonylation marks active promoters and enhancers and confers resistance to transcriptional repressors. It is also associated with post-meiotically activated genes on autosomes. In terms of processing, butyrylation of histones marks active promoters and competes with histone acetylation. It is present during late spermatogenesis. Post-translationally, succinylation at Lys-80 (H3K79succ) by KAT2A takes place with a maximum frequency around the transcription start sites of genes. It gives a specific tag for epigenetic transcription activation. Desuccinylation at Lys-123 (H3K122succ) by SIRT7 in response to DNA damage promotes chromatin condensation and double-strand breaks (DSBs) repair. Serine ADP-ribosylation by PARP1 or PARP2 constitutes the primary form of ADP-ribosylation of proteins in response to DNA damage. Serine ADP-ribosylation at Ser-11 (H3S10ADPr) promotes recruitment of CHD1L. H3S10ADPr is mutually exclusive with phosphorylation at Ser-11 (H3S10ph) and impairs acetylation at Lys-10 (H3K9ac). In terms of processing, serotonylated by TGM2 at Gln-6 (H3Q5ser) during serotonergic neuron differentiation. H3Q5ser is associated with trimethylation of Lys-5 (H3K4me3) and enhances general transcription factor IID (TFIID) complex-binding to H3K4me3, thereby facilitating transcription. Post-translationally, dopaminylated by TGM2 at Gln-6 (H3Q5dop) in ventral tegmental area (VTA) neurons. H3Q5dop mediates neurotransmission-independent role of nuclear dopamine by regulating relapse-related transcriptional plasticity in the reward system. Lactylated in macrophages by EP300/P300 by using lactoyl-CoA directly derived from endogenous or exogenous lactate, leading to stimulates gene transcription.

The protein localises to the nucleus. It localises to the chromosome. Functionally, core component of nucleosome. Nucleosomes wrap and compact DNA into chromatin, limiting DNA accessibility to the cellular machineries which require DNA as a template. Histones thereby play a central role in transcription regulation, DNA repair, DNA replication and chromosomal stability. DNA accessibility is regulated via a complex set of post-translational modifications of histones, also called histone code, and nucleosome remodeling. The sequence is that of Histone H3.2 from Cricetulus longicaudatus (Long-tailed dwarf hamster).